Reading from the N-terminus, the 435-residue chain is Xylose isomerase (435 aa).

The Mg(2+) site is built by D306 and D308.

This sequence belongs to the xylose isomerase family. Homotetramer. It depends on Mg(2+) as a cofactor.

The protein localises to the cytoplasm. The catalysed reaction is alpha-D-xylose = alpha-D-xylulofuranose. In Allorhizobium ampelinum (strain ATCC BAA-846 / DSM 112012 / S4) (Agrobacterium vitis (strain S4)), this protein is Xylose isomerase.